The sequence spans 345 residues: DNA-directed RNA polymerase subunit alpha (345 aa).

Positions 1–241 are alpha N-terminal domain (alpha-NTD); sequence MLRDTHLALQ…DQLGMFINFE (241 aa). The interval 257–345 is alpha C-terminal domain (alpha-CTD); that stretch reads FNPNLLRKVD…ELVKRSDNPF (89 aa).

This sequence belongs to the RNA polymerase alpha chain family. As to quaternary structure, homodimer. The RNAP catalytic core consists of 2 alpha, 1 beta, 1 beta' and 1 omega subunit. When a sigma factor is associated with the core the holoenzyme is formed, which can initiate transcription.

It catalyses the reaction RNA(n) + a ribonucleoside 5'-triphosphate = RNA(n+1) + diphosphate. DNA-dependent RNA polymerase catalyzes the transcription of DNA into RNA using the four ribonucleoside triphosphates as substrates. This Acidiphilium cryptum (strain JF-5) protein is DNA-directed RNA polymerase subunit alpha.